The chain runs to 359 residues: Peptide chain release factor 1 (359 aa).

Position 236 is an N5-methylglutamine (glutamine 236).

It belongs to the prokaryotic/mitochondrial release factor family. Methylated by PrmC. Methylation increases the termination efficiency of RF1.

It is found in the cytoplasm. Functionally, peptide chain release factor 1 directs the termination of translation in response to the peptide chain termination codons UAG and UAA. This Streptococcus pneumoniae serotype 19F (strain G54) protein is Peptide chain release factor 1.